Reading from the N-terminus, the 220-residue chain is MEAERRHRALYKGTTPPWKETYRKRCVERLKSNRSKLLDKFRQVGERIHGGVGGSFLVQEVMEEEWKVMQFENGGFPSMWKKDAFSQDPDELATLEEIKQELLLEEKAMVEEFENILQFEEQCFDSVVELSTGDQIVCPVCNRNYLTVTSCFIVCQCGVYINTQSQGMSIEKLHSLLESNLTAHAYHCNKLPVFSVATELGGAASLFMSCQECDAMVVIL.

The segment at 1–45 is interaction with importin beta; that stretch reads MEAERRHRALYKGTTPPWKETYRKRCVERLKSNRSKLLDKFRQVG. An interaction with RPA1 region spans residues 49-165; the sequence is HGGVGGSFLV…QCGVYINTQS (117 aa). An RIP-type zinc finger spans residues 138–213; it reads CPVCNRNYLT…ASLFMSCQEC (76 aa).

In terms of assembly, interacts directly with the RPA1 subunit of RPA complex. Interacts with importin beta, but not with importin alpha. Forms a complex with the RPA complex and importin beta, which is dissociated by Ran-GTP.

Its subcellular location is the nucleus. Functionally, mediates the import of RPA complex into the nucleus, via its interaction with importin beta. This chain is RPA-interacting protein B (rpain-b), found in Xenopus laevis (African clawed frog).